A 200-amino-acid chain; its full sequence is Dipicolinate synthase subunit B (200 aa).

As to quaternary structure, dipicolinate synthase likely consists of DpaA and DpaB, since both proteins are required for DPA synthesis.

The catalysed reaction is (S)-2,3-dihydrodipicolinate + NADP(+) = dipicolinate + NADPH + H(+). Its function is as follows. Together with DpaA, catalyzes the conversion of dihydrodipicolinate to dipicolinate (DPA), which constitutes up to 10% of the dry weight of the spore. In Bacillus subtilis (strain 168), this protein is Dipicolinate synthase subunit B (dpaB).